Reading from the N-terminus, the 324-residue chain is Glutamyl-Q tRNA(Asp) synthetase (324 aa).

L-glutamate-binding positions include 5 to 9 and Glu-41; that span reads RLAPS. The 'HIGH' region motif lies at 8–18; it reads PSPTGNIHLGN. Positions 105, 107, 128, and 132 each coordinate Zn(2+). Positions 193 and 211 each coordinate L-glutamate. A 'KMSKS' region motif is present at residues 249 to 253; the sequence is RLAKR. Residue Lys-252 participates in ATP binding.

This sequence belongs to the class-I aminoacyl-tRNA synthetase family. GluQ subfamily. Zn(2+) serves as cofactor.

Its function is as follows. Catalyzes the tRNA-independent activation of glutamate in presence of ATP and the subsequent transfer of glutamate onto a tRNA(Asp). Glutamate is transferred on the 2-amino-5-(4,5-dihydroxy-2-cyclopenten-1-yl) moiety of the queuosine in the wobble position of the QUC anticodon. In Nitratidesulfovibrio vulgaris (strain ATCC 29579 / DSM 644 / CCUG 34227 / NCIMB 8303 / VKM B-1760 / Hildenborough) (Desulfovibrio vulgaris), this protein is Glutamyl-Q tRNA(Asp) synthetase.